The chain runs to 150 residues: MLQLFLRNCAFRIIAVGKVRKGWIQDGLAMYQKRLPGLMITEVRDASLPREAEAILAALNSNEVLVPLSEEGEALTSVSFAKRLEKYGSQRLAFVIGGADGLSAELKNSTQWQLSLSAMTLPHELARLLLVEQLYRAQTILQGGKYHRGS.

S-adenosyl-L-methionine-binding positions include leucine 68, glycine 97, and 116-121; that span reads LSAMTL.

It belongs to the RNA methyltransferase RlmH family. As to quaternary structure, homodimer.

Its subcellular location is the cytoplasm. It carries out the reaction pseudouridine(1915) in 23S rRNA + S-adenosyl-L-methionine = N(3)-methylpseudouridine(1915) in 23S rRNA + S-adenosyl-L-homocysteine + H(+). Specifically methylates the pseudouridine at position 1915 (m3Psi1915) in 23S rRNA. In Prochlorococcus marinus (strain MIT 9303), this protein is Ribosomal RNA large subunit methyltransferase H.